Here is a 244-residue protein sequence, read N- to C-terminus: Dehydration-responsive element-binding protein 2E (244 aa).

The segment at 1 to 25 is disordered; that stretch reads MEKEDNGSKQSSSASVVSSRRRRRV. The short motif at 20–46 is the Nuclear localization signal element; the sequence is RRRRRVVEPVEATLQRWEEEGLARARR. Positions 69–134 form a DNA-binding region, AP2/ERF; the sequence is RFRGVRQRVW…YGPYARLNFP (66 aa).

This sequence belongs to the AP2/ERF transcription factor family. ERF subfamily. In terms of tissue distribution, expressed in xylem tissues, stigma, anthers and region where sepals and petals attach the peduncle.

The protein resides in the nucleus. Its function is as follows. Transcriptional activator that binds specifically to the DNA sequence 5'-[AG]CCGAC-3'. Binding to the C-repeat/DRE element mediates abscisic acid-inducible transcription. Involved in the regulation of plant development and tolerance to abiotic stresses. In Arabidopsis thaliana (Mouse-ear cress), this protein is Dehydration-responsive element-binding protein 2E (DREB2E).